A 99-amino-acid chain; its full sequence is UPF0235 protein AHA_3661 (99 aa).

This sequence belongs to the UPF0235 family.

The protein is UPF0235 protein AHA_3661 of Aeromonas hydrophila subsp. hydrophila (strain ATCC 7966 / DSM 30187 / BCRC 13018 / CCUG 14551 / JCM 1027 / KCTC 2358 / NCIMB 9240 / NCTC 8049).